The chain runs to 550 residues: Arginine--tRNA ligase (550 aa).

The 'HIGH' region motif lies at 122-132; that stretch reads GNPTGPLHLAH.

This sequence belongs to the class-I aminoacyl-tRNA synthetase family. Monomer.

The protein resides in the cytoplasm. The enzyme catalyses tRNA(Arg) + L-arginine + ATP = L-arginyl-tRNA(Arg) + AMP + diphosphate. This Tropheryma whipplei (strain TW08/27) (Whipple's bacillus) protein is Arginine--tRNA ligase.